Consider the following 183-residue polypeptide: MSAITPYDWAIIAFVIGVTFLCVFMLTVPLLLGGKSWGRAKQEQFESGVVSAGGARIRLSAKFYLVAIFFVVFDLEALYLYAWSTSVREVGWLGYTTVVIFVVDLLIALVYAFSVGALSWAPADRRKLAGEKVKVGSPTMNIAEITRFNSIEELVTDPTGQIPAQSSGRVKSKTTPALSSEKE.

The next 3 membrane-spanning stretches (helical) occupy residues Ile11–Leu31, Phe63–Trp83, and Val98–Leu118. Residues Thr159 to Glu183 are disordered.

This sequence belongs to the complex I subunit 3 family. As to quaternary structure, NDH-1 is composed of 14 different subunits. Subunits NuoA, H, J, K, L, M, N constitute the membrane sector of the complex.

The protein resides in the cell inner membrane. The enzyme catalyses a quinone + NADH + 5 H(+)(in) = a quinol + NAD(+) + 4 H(+)(out). NDH-1 shuttles electrons from NADH, via FMN and iron-sulfur (Fe-S) centers, to quinones in the respiratory chain. The immediate electron acceptor for the enzyme in this species is believed to be ubiquinone. Couples the redox reaction to proton translocation (for every two electrons transferred, four hydrogen ions are translocated across the cytoplasmic membrane), and thus conserves the redox energy in a proton gradient. This Acinetobacter baumannii (strain AYE) protein is NADH-quinone oxidoreductase subunit A.